The primary structure comprises 547 residues: Sodium-coupled neutral amino acid transporter 4 (547 aa).

The Extracellular portion of the chain corresponds to 1-104 (MDPIELRSVN…GLSYAMANTG (104 aa)). Serine 49 carries the phosphoserine modification. A helical membrane pass occupies residues 105-125 (IVLFVIMLLTVAILSLYSVHL). Residues 126-151 (LLKTAKEGGSLIYEKLGEKAFGWPGK) are Cytoplasmic-facing. Residues 152 to 172 (IGAFISITMQNIGAMSSYLFI) traverse the membrane as a helical segment. Over 173 to 195 (IKYELPEVIRVFMGLEENTGEWY) the chain is Extracellular. The helical transmembrane segment at 196-216 (LNGNYLVLFVSVGIILPLSLL) threads the bilayer. Residues 217 to 220 (KNLG) are Cytoplasmic-facing. The chain crosses the membrane as a helical span at residues 221–241 (YLGYTSGFSLTCMVFFVSVVI). The Extracellular portion of the chain corresponds to 242–332 (YKKFQIPCPL…PKYFVFNSRT (91 aa)). Cysteines 249 and 321 form a disulfide. N-linked (GlcNAc...) asparagine glycosylation is found at asparagine 260, asparagine 264, and asparagine 276. Residues 333 to 353 (AYAIPILAFAFVCHPEVLPIY) traverse the membrane as a helical segment. The Cytoplasmic portion of the chain corresponds to 354–369 (SELKDRSRRKMQTVSN). The helical transmembrane segment at 370-390 (ISITGMLVMYLLAALFGYLSF) threads the bilayer. The Extracellular portion of the chain corresponds to 391-411 (YGEVEDELLHAYSKVYTFDTA). Residues 412–432 (LLMVRLAVLVAVTLTVPIVLF) traverse the membrane as a helical segment. Residues 433-453 (PIRTSVITLLFPRRPFSWVKH) are Cytoplasmic-facing. Residues 454-474 (FGIAAIIIALNNVLVILVPTI) form a helical membrane-spanning segment. The Extracellular segment spans residues 475–476 (KY). A helical membrane pass occupies residues 477–497 (IFGFIGASSATMLIFILPAAF). The Cytoplasmic portion of the chain corresponds to 498-514 (YLKLVKKEPLRSPQKIG). The helical transmembrane segment at 515 to 535 (ALVFLVTGIIFMMGSMALIII) threads the bilayer. At 536-547 (DWIYNPPNPDHH) the chain is on the extracellular side.

It belongs to the amino acid/polyamine transporter 2 family. Post-translationally, the disulfide bond plays an important role in substrate transport, but has no effect on trafficking to the cell surface. Expressed predominantly in liver, and at lower level in skeletal muscle.

It is found in the cell membrane. The protein resides in the cell projection. The protein localises to the microvillus membrane. The catalysed reaction is L-alanine(in) + Na(+)(in) = L-alanine(out) + Na(+)(out). The enzyme catalyses L-serine(in) + Na(+)(in) = L-serine(out) + Na(+)(out). It carries out the reaction glycine(in) + Na(+)(in) = glycine(out) + Na(+)(out). It catalyses the reaction L-cysteine(in) + Na(+)(in) = L-cysteine(out) + Na(+)(out). The catalysed reaction is L-asparagine(in) + Na(+)(in) = L-asparagine(out) + Na(+)(out). The enzyme catalyses L-threonine(in) + Na(+)(in) = L-threonine(out) + Na(+)(out). It carries out the reaction L-proline(in) + Na(+)(in) = L-proline(out) + Na(+)(out). It catalyses the reaction L-methionine(in) + Na(+)(in) = L-methionine(out) + Na(+)(out). The catalysed reaction is L-glutamine(in) + Na(+)(in) = L-glutamine(out) + Na(+)(out). The enzyme catalyses L-histidine(in) + Na(+)(in) = L-histidine(out) + Na(+)(out). Functionally, symporter that cotransports neutral amino acids and sodium ions from the extraccellular to the intracellular side of the cell membrane. The transport is electrogenic, pH dependent and partially tolerates substitution of Na(+) by Li(+). Preferentially transports smaller amino acids, such as glycine, L-alanine, L-serine, L-asparagine and L-threonine, followed by L-cysteine, L-histidine, L-proline and L-glutamine and L-methionine. This Rattus norvegicus (Rat) protein is Sodium-coupled neutral amino acid transporter 4.